A 271-amino-acid polypeptide reads, in one-letter code: MSTQPIIYVLSDSVGETAELVVKAGLSQFKNGDYKIQRVPYVEDKETVDEFLALAKDTVSIVGFTLVDPELRAYVNSQAKKLEVEAIDIMGPTMDAMGRVFNRTPRLEAGLVHKLDEDYFKKIEAIEFAVKYDDGRDPRGIARADIILIGVSRTSKTPLSQYLAHKRIKVANVPIVPEVDPPEELMMVDPKKCIGLKITAEKLNSIRKERLKALGLGDQATYANMNRIEQELEYFQSIVDKIGCQVIDVSNKAVEETANHILRLKQENNSL.

150-157 contacts ADP; that stretch reads GVSRTSKT.

It belongs to the pyruvate, phosphate/water dikinase regulatory protein family. PDRP subfamily.

The enzyme catalyses N(tele)-phospho-L-histidyl/L-threonyl-[pyruvate, phosphate dikinase] + ADP = N(tele)-phospho-L-histidyl/O-phospho-L-threonyl-[pyruvate, phosphate dikinase] + AMP + H(+). The catalysed reaction is N(tele)-phospho-L-histidyl/O-phospho-L-threonyl-[pyruvate, phosphate dikinase] + phosphate + H(+) = N(tele)-phospho-L-histidyl/L-threonyl-[pyruvate, phosphate dikinase] + diphosphate. Functionally, bifunctional serine/threonine kinase and phosphorylase involved in the regulation of the pyruvate, phosphate dikinase (PPDK) by catalyzing its phosphorylation/dephosphorylation. The sequence is that of Putative pyruvate, phosphate dikinase regulatory protein from Oceanobacillus iheyensis (strain DSM 14371 / CIP 107618 / JCM 11309 / KCTC 3954 / HTE831).